A 128-amino-acid polypeptide reads, in one-letter code: Large ribosomal subunit protein bL20c (128 aa).

The protein belongs to the bacterial ribosomal protein bL20 family.

It is found in the plastid. The protein localises to the chloroplast. Its function is as follows. Binds directly to 23S ribosomal RNA and is necessary for the in vitro assembly process of the 50S ribosomal subunit. It is not involved in the protein synthesizing functions of that subunit. The polypeptide is Large ribosomal subunit protein bL20c (Daucus carota (Wild carrot)).